The chain runs to 146 residues: Large ribosomal subunit protein uL15 (146 aa).

A disordered region spans residues 1-56 (MKLHELKAAEGANKASKRVGRGTGSGLGKTSGRGQNGQNSRSGGGVRPGFEGGQMP). Gly residues-rich tracts occupy residues 21 to 35 (RGTGSGLGKTSGRGQ) and 42 to 52 (SGGGVRPGFEG).

It belongs to the universal ribosomal protein uL15 family. In terms of assembly, part of the 50S ribosomal subunit.

Its function is as follows. Binds to the 23S rRNA. The sequence is that of Large ribosomal subunit protein uL15 from Clostridium botulinum (strain ATCC 19397 / Type A).